The sequence spans 736 residues: Oxysterol-binding protein-related protein 9 (736 aa).

Ala-2 is modified (N-acetylalanine). The 98-residue stretch at 2-99 (ASIVEGPLSK…WIHALEETIL (98 aa)) folds into the PH domain. Positions 209 to 368 (LEPVISTMPS…RDDDGEAGSV (160 aa)) are disordered. The segment covering 253–274 (TPTPNSTGSGNSPPSSSLTPPS) has biased composition (low complexity). Ser-306, Ser-324, Ser-325, Ser-326, and Ser-329 each carry phosphoserine. Composition is skewed to polar residues over residues 314 to 329 (SSGS…SGNS) and 336 to 348 (TESL…NGTS). The residue at position 611 (Ser-611) is a Phosphoserine.

This sequence belongs to the OSBP family. In terms of assembly, heterodimer with OSBPL11. Interacts with OSBPL10.

The protein resides in the late endosome membrane. Its subcellular location is the golgi apparatus. It is found in the trans-Golgi network membrane. It carries out the reaction a 1,2-diacyl-sn-glycero-3-phospho-(1D-myo-inositol 4-phosphate)(out) + a 1,2-diacyl-sn-glycero-3-phospho-L-serine(in) = a 1,2-diacyl-sn-glycero-3-phospho-(1D-myo-inositol 4-phosphate)(in) + a 1,2-diacyl-sn-glycero-3-phospho-L-serine(out). Interacts with OSBPL11 to function as lipid transfer proteins. Together they form a heterodimer that localizes at the ER-trans-Golgi membrane contact sites, and exchanges phosphatidylserine (1,2-diacyl-sn-glycero-3-phospho-L-serine, PS) for phosphatidylinositol-4-phosphate (1,2-diacyl-sn-glycero-3-phospho-(1D-myo-inositol 4-phosphate), PI(4)P) between the two organelles, a step that is critical for sphingomyelin synthesis in the Golgi complex. The protein is Oxysterol-binding protein-related protein 9 (Osbpl9) of Mus musculus (Mouse).